Reading from the N-terminus, the 798-residue chain is Integrin beta-1 (798 aa).

A signal peptide spans 1 to 20 (MNLQPIFWIGLISSICCVFA). Residues 26 to 76 (RCLKANAKSCGECIQAGPNCGWCTNSTFLQEGMPTSARCDDLEALKKKGCP) form the PSI domain. 28 disulfides stabilise this stretch: Cys27/Cys45, Cys35/Cys464, Cys38/Cys64, Cys48/Cys75, Cys207/Cys213, Cys261/Cys301, Cys401/Cys415, Cys435/Cys462, Cys466/Cys486, Cys477/Cys489, Cys491/Cys500, Cys502/Cys533, Cys516/Cys531, Cys525/Cys536, Cys538/Cys553, Cys555/Cys576, Cys560/Cys574, Cys568/Cys579, Cys581/Cys590, Cys592/Cys615, Cys599/Cys613, Cys607/Cys618, Cys620/Cys630, Cys633/Cys636, Cys640/Cys691, Cys646/Cys665, Cys649/Cys661, and Cys699/Cys723. The N-linked (GlcNAc...) asparagine glycan is linked to Asn50. Residues 75-107 (CPPDDIENPRGSKDIKKNKNVTNRSKGTAEKLK) are disordered. Basic and acidic residues predominate over residues 81-91 (ENPRGSKDIKK). 2 N-linked (GlcNAc...) asparagine glycosylation sites follow: Asn94 and Asn97. A VWFA domain is found at 140 to 378 (DYPIDLYYLM…QLIIDAYNSL (239 aa)). Ser152 and Ser154 together coordinate Mg(2+). Ca(2+) contacts are provided by Ser154, Asp157, Asp158, and Glu189. Residues 207–213 (CTSEQNC) form a CX3CL1-binding region. The N-linked (GlcNAc...) asparagine glycan is linked to Asn212. Asn244, Asp246, Pro248, and Glu249 together coordinate Ca(2+). Position 249 (Glu249) interacts with Mg(2+). Asn269 carries N-linked (GlcNAc...) asparagine glycosylation. Residues 295-314 (LPNDGQCHLENNMYTMSHYY) form a CX3CL1-binding region. Ala362 provides a ligand contact to Ca(2+). 3 N-linked (GlcNAc...) asparagine glycosylation sites follow: Asn363, Asn406, and Asn417. The interaction with TMEM182 stretch occupies residues 383-465 (ILENSKLSEG…VILQYICECE (83 aa)). I-EGF domains follow at residues 466–501 (CQSE…RHCE), 502–554 (CSTD…KFCE), 555–591 (CDNF…SACD), and 592–631 (CSLD…QTCE). A glycan (N-linked (GlcNAc...) asparagine) is linked at Asn481. The N-linked (GlcNAc...) asparagine glycan is linked to Asn520. An N-linked (GlcNAc...) asparagine glycan is attached at Asn584. A glycan (N-linked (GlcNAc...) asparagine) is linked at Asn669. The chain crosses the membrane as a helical span at residues 729–749 (IIPIVAGVVAGIVLIGLALLL). Residues 762 to 767 (EFAKFE) are signal for sorting from recycling endosomes; interaction with ACAP1. A Phosphothreonine modification is found at Thr777. Phosphotyrosine is present on Tyr783. At Ser785 the chain carries Phosphoserine. The interaction with ITGB1BP1 stretch occupies residues 785 to 792 (SAVTTVVN). Thr789 is subject to Phosphothreonine. Lys794 carries the post-translational modification N6-acetyllysine; alternate. A Glycyl lysine isopeptide (Lys-Gly) (interchain with G-Cter in SUMO1); alternate cross-link involves residue Lys794.

It belongs to the integrin beta chain family. Interacts with seprase FAP (seprase); the interaction occurs at the cell surface of invadopodia membrane in a collagen-dependent manner. Heterodimer of an alpha and a beta subunit. Beta-1 associates with either alpha-1, alpha-2, alpha-3, alpha-4, alpha-5, alpha-6, alpha-7, alpha-8, alpha-9, alpha-10, alpha-11 or alpha-V. ITGA6:ITGB1 is found in a complex with CD9; interaction takes place in oocytes and is involved in sperm-egg fusion. Binds LGALS3BP and NMRK2, when associated with alpha-7, but not with alpha-5. Interacts with FLNA, FLNB, FLNC and RANBP9. Interacts with KRT1 in the presence of RACK1 and SRC. Interacts with JAML; integrin alpha-4/beta-1 may regulate leukocyte to endothelial cells adhesion by controlling JAML homodimerization. Interacts with RAB21. Interacts (via the cytoplasmic region) with RAB25 (via the hypervariable C-terminal region). Interacts with MYO10. Interacts with ITGB1BP1 (via C-terminal region); the interaction is a prerequisite for focal adhesion disassembly. Interacts with TLN1; the interaction is prevented by competitive binding of ITGB1BP1. Interacts with ACAP1; required for ITGB1 recycling. Interacts with ASAP3. Interacts with FERMT2; the interaction is inhibited in presence of ITGB1BP1. Interacts with DAB2. Interacts with FGR and HCK. Interacts with alpha-7A and alpha-7B in adult skeletal muscle. Interacts with alpha-7B in cardiomyocytes of adult heart. Interacts with EMP2; the interaction may be direct or indirect and ITGB1 has a heterodimer form. ITGA5:ITGB1 interacts with CCN3. ITGA4:ITGB1 is found in a ternary complex with CX3CR1 and CX3CL1. ITGA5:ITGB1 interacts with FBN1. ITGA5:ITGB1 acts as a receptor for fibronectin FN1 and mediates R-G-D-dependent cell adhesion to FN1. ITGA5:ITGB1 interacts with IL1B. Interacts with MDK. ITGA4:ITGB1 interacts with MDK; this interaction mediates MDK-induced osteoblast cells migration through PXN phosphorylation. ITGA6:ITGB1 interacts with MDK; this interaction mediates MDK-induced neurite-outgrowth. ITGA5:ITGB1 interacts with ACE2. Interacts with TMEM182 and LAMB1. Interacts with tensin TNS3; TNS3 also interacts with PEAK1, thus acting as an adapter molecule to bridge the association of PEAK1 with ITGB1. Interacts with tensin TNS4; the interaction displaces tensin TNS3 from the ITGB1 cytoplasmic tail and promotes ITGB1 stability. Integrin ITGA9:ITGB1 interacts with SPP1/OPN (via N-terminus). Integrin ITGA9:ITGB1 interacts with TNC/TNFN3 (via the 3rd Fibronectin type-III domain). Integrins ITGA4:ITGB1 and ITGA9:ITGB1 interact with SVEP1 (via Sushi domain 21); thereby inhibit Ca(2+) intracellular signaling and as a result repress vasocontraction. ITGA4:ITGB1 and ITGA5:ITGB1 interacts with SELP. Interacts with CD248. ITGA5:ITGB1 interacts with IGFBP1. ITGA4:ITGB1 interacts with BCAM. Interacts with ADGRG6.

The protein localises to the cell membrane. It is found in the cell projection. It localises to the invadopodium membrane. Its subcellular location is the ruffle membrane. The protein resides in the recycling endosome. The protein localises to the melanosome. It is found in the lamellipodium. It localises to the ruffle. Its subcellular location is the cell junction. The protein resides in the focal adhesion. In terms of biological role, integrins alpha-1/beta-1, alpha-2/beta-1, alpha-10/beta-1 and alpha-11/beta-1 are receptors for collagen. Integrins alpha-1/beta-1 and alpha-2/beta-2 recognize the proline-hydroxylated sequence G-F-P-G-E-R in collagen. Integrins alpha-2/beta-1, alpha-3/beta-1, alpha-4/beta-1, alpha-5/beta-1, alpha-8/beta-1, alpha-10/beta-1, alpha-11/beta-1 and alpha-V/beta-1 are receptors for fibronectin. Alpha-4/beta-1 recognizes one or more domains within the alternatively spliced CS-1 and CS-5 regions of fibronectin. Integrin alpha-5/beta-1 is a receptor for fibrinogen. Integrin alpha-1/beta-1, alpha-2/beta-1, alpha-6/beta-1 and alpha-7/beta-1 are receptors for lamimin. Integrin alpha-6/beta-1 (ITGA6:ITGB1) is present in oocytes and is involved in sperm-egg fusion. Integrin alpha-4/beta-1 is a receptor for VCAM1 and recognizes the sequence Q-I-D-S in VCAM1. Integrin alpha-9/beta-1 is a receptor for VCAM1, cytotactin and osteopontin. It recognizes the sequence A-E-I-D-G-I-E-L in cytotactin. Integrin alpha-3/beta-1 is a receptor for epiligrin, thrombospondin and CSPG4. Integrin alpha-3/beta-1 provides a docking site for FAP (seprase) at invadopodia plasma membranes in a collagen-dependent manner and hence may participate in the adhesion, formation of invadopodia and matrix degradation processes, promoting cell invasion. Alpha-3/beta-1 may mediate with LGALS3 the stimulation by CSPG4 of endothelial cells migration. Integrin alpha-V/beta-1 is a receptor for vitronectin. Beta-1 integrins recognize the sequence R-G-D in a wide array of ligands. When associated with alpha-7/beta-1 integrin, regulates cell adhesion and laminin matrix deposition. Involved in promoting endothelial cell motility and angiogenesis. Involved in osteoblast compaction through the fibronectin fibrillogenesis cell-mediated matrix assembly process and the formation of mineralized bone nodules. May be involved in up-regulation of the activity of kinases such as PKC via binding to KRT1. Together with KRT1 and RACK1, serves as a platform for SRC activation or inactivation. Plays a mechanistic adhesive role during telophase, required for the successful completion of cytokinesis. ITGA4:ITGB1 binds to fractalkine (CX3CL1) and may act as its coreceptor in CX3CR1-dependent fractalkine signaling. ITGA4:ITGB1 and ITGA5:ITGB1 bind to PLA2G2A via a site (site 2) which is distinct from the classical ligand-binding site (site 1) and this induces integrin conformational changes and enhanced ligand binding to site 1. ITGA5:ITGB1 acts as a receptor for fibrillin-1 (FBN1) and mediates R-G-D-dependent cell adhesion to FBN1. ITGA5:ITGB1 is a receptor for IL1B and binding is essential for IL1B signaling. ITGA5:ITGB3 is a receptor for soluble CD40LG and is required for CD40/CD40LG signaling. Plays an important role in myoblast differentiation and fusion during skeletal myogenesis. ITGA9:ITGB1 may play a crucial role in SVEP1/polydom-mediated myoblast cell adhesion. Integrins ITGA9:ITGB1 and ITGA4:ITGB1 repress PRKCA-mediated L-type voltage-gated channel Ca(2+) influx and ROCK-mediated calcium sensitivity in vascular smooth muscle cells via their interaction with SVEP1, thereby inhibit vasocontraction. This Pongo abelii (Sumatran orangutan) protein is Integrin beta-1 (ITGB1).